A 223-amino-acid chain; its full sequence is Killer cell lectin-like receptor subfamily B member 1B allele C (223 aa).

Topologically, residues 1 to 45 (MDTAVVYADLHLARTGEPKRESPPSLSPDTCQCPRWHRLALKLGC) are cytoplasmic. Residues 5 to 10 (VVYADL) carry the ITIM motif motif. Positions 31–34 (CQCP) match the LCK-binding motif motif. The chain crosses the membrane as a helical; Signal-anchor for type II membrane protein span at residues 46–66 (ACFILLVLSVIGLGVLVLTLL). Over 67–223 (QKPLLQNSPA…LKRESTCNDS (157 aa)) the chain is Extracellular. The C-type lectin domain maps to 101–211 (HRDKCFHVSQ…CDSDNIWICQ (111 aa)). Disulfide bonds link Cys-122–Cys-210 and Cys-189–Cys-202.

As to quaternary structure, homodimer; disulfide-linked. Interacts with tyrosine kinase LCK. Binds PTPN6/SHP-1 in a phosphorylation-dependent manner. In terms of tissue distribution, expressed in a subset of natural killer cells.

The protein localises to the membrane. Functionally, receptor for CLEC2D/OCIL. Ligand-binding contributes to inhibition of cytotoxic natural killer (NK) cells. May mediate MHC class I-independent 'missing-self' recognition of allografts, tumor cells and virus-infected cells. The protein is Killer cell lectin-like receptor subfamily B member 1B allele C of Rattus norvegicus (Rat).